Consider the following 625-residue polypeptide: MSQPLHARFATRAVKNPMILEKERQLTDSKYHILVAATGSVAAIKLTLIVKSLLTYKGVDVQVVLTDPARNFVEKEDLTALGVNVYNNADDWKNWDGLECPITHIELRRWAHLLLIAPLSANTMAKMANGLCDNLLTSLIRAWAPLKPILLAPAMNTLMWTNPITQEHLSAISRIYKNSEFIMPIEKVLACGDIGMGGMAEWRNIVGRVADKLQLEQKSVLPNAVKNIDGQDDDSSEQTAAFEEYDDDDDDDVDDNEQSNSMIETSANADITPKASLLPSTTESSISKDHETSQAPLGSESVDTQASENVTTKPEPPVPFTSSEYRNTEEEQYLNLIRYILENGQSRPDRTGTGTRSVFAPPQLRFSLRNNTLPLLTTKRVFLRGVLEELLWFIHGDTNANHLSEKGIHIWDGNGSREFLDSRGLTDRKVGDLGPIYGFQWRHFGAQYVDCDTDYTNKGVDQLAQVISTLKLNPYDRRIILSAWNPLAIPEMALPPCHIFCQFYVSEPCKPGGKPQLSSMMYQRSADMGLGVPFNIASYSLLTHMIAHMCGYEAAEFVHVMGDCHIYNDHLEALQTQLERVPKAFPKLFFKRDAKDIGSIDSFSVDDFAVEGYNPYGPIKMKMSV.

The segment at 224-323 (AVKNIDGQDD…PEPPVPFTSS (100 aa)) is disordered. Residues 243-257 (EEYDDDDDDDVDDNE) show a composition bias toward acidic residues. Polar residues-rich tracts occupy residues 258-269 (QSNSMIETSANA) and 293-312 (SQAP…NVTT). DUMP is bound by residues Arg350 and 477–478 (RR). Cys497 (nucleophile) is an active-site residue. Residues 524 to 527 (RSAD), Asn535, and 565 to 567 (HIY) contribute to the dUMP site. Asp527 contacts (6R)-5,10-methylene-5,6,7,8-tetrahydrofolate.

In the N-terminal section; belongs to the HFCD (homo-oligomeric flavin containing Cys decarboxylase) superfamily. It in the C-terminal section; belongs to the thymidylate synthase family.

It is found in the cytoplasm. The enzyme catalyses dUMP + (6R)-5,10-methylene-5,6,7,8-tetrahydrofolate = 7,8-dihydrofolate + dTMP. The protein operates within pyrimidine metabolism; dTTP biosynthesis. Required for both nuclear and mitochondrial DNA synthesis. This is Probable thymidylate synthase from Schizosaccharomyces pombe (strain 972 / ATCC 24843) (Fission yeast).